The primary structure comprises 172 residues: Co-chaperone protein HscB homolog (172 aa).

Residues asparagine 2–leucine 69 form the J domain.

It belongs to the HscB family. In terms of assembly, interacts with HscA and stimulates its ATPase activity.

Functionally, co-chaperone involved in the maturation of iron-sulfur cluster-containing proteins. Seems to help targeting proteins to be folded toward HscA. The chain is Co-chaperone protein HscB homolog from Acinetobacter baumannii (strain AB307-0294).